Consider the following 119-residue polypeptide: Non-specific lipid-transfer protein 3 (119 aa).

The N-terminal stretch at Met1 to Ala24 is a signal peptide. Cystine bridges form between Cys28/Cys77, Cys38/Cys54, Cys55/Cys100, and Cys75/Cys114.

It belongs to the plant LTP family. In terms of tissue distribution, expressed in roots, stem, leaves and tendrils of the mature plant.

Plant non-specific lipid-transfer proteins transfer phospholipids as well as galactolipids across membranes. May play a role in wax or cutin deposition in the cell walls of expanding epidermal cells and certain secretory tissues. The protein is Non-specific lipid-transfer protein 3 of Pisum sativum (Garden pea).